Consider the following 355-residue polypeptide: tRNA pseudouridine synthase D (355 aa).

Aspartate 84 functions as the Nucleophile in the catalytic mechanism. The 147-residue stretch at 160–306 (GVPNYFGLQR…MAHERRILRL (147 aa)) folds into the TRUD domain.

This sequence belongs to the pseudouridine synthase TruD family.

It catalyses the reaction uridine(13) in tRNA = pseudouridine(13) in tRNA. Its function is as follows. Responsible for synthesis of pseudouridine from uracil-13 in transfer RNAs. The polypeptide is tRNA pseudouridine synthase D (Pseudomonas aeruginosa (strain LESB58)).